Reading from the N-terminus, the 404-residue chain is Cysteine desulfurase IscS (404 aa).

Pyridoxal 5'-phosphate is bound by residues 75 to 76 (AT), Asn155, Gln183, and 203 to 205 (SGH). Residue Lys206 is modified to N6-(pyridoxal phosphate)lysine. Thr243 is a binding site for pyridoxal 5'-phosphate. Cys328 serves as the catalytic Cysteine persulfide intermediate. Cys328 serves as a coordination point for [2Fe-2S] cluster.

Belongs to the class-V pyridoxal-phosphate-dependent aminotransferase family. NifS/IscS subfamily. As to quaternary structure, homodimer. Forms a heterotetramer with IscU, interacts with other sulfur acceptors. Pyridoxal 5'-phosphate is required as a cofactor.

It localises to the cytoplasm. It carries out the reaction (sulfur carrier)-H + L-cysteine = (sulfur carrier)-SH + L-alanine. Its pathway is cofactor biosynthesis; iron-sulfur cluster biosynthesis. Functionally, master enzyme that delivers sulfur to a number of partners involved in Fe-S cluster assembly, tRNA modification or cofactor biosynthesis. Catalyzes the removal of elemental sulfur and selenium atoms from cysteine and selenocysteine to produce alanine. Functions as a sulfur delivery protein for Fe-S cluster synthesis onto IscU, an Fe-S scaffold assembly protein, as well as other S acceptor proteins. Also functions as a selenium delivery protein in the pathway for the biosynthesis of selenophosphate. The sequence is that of Cysteine desulfurase IscS from Salmonella schwarzengrund (strain CVM19633).